A 186-amino-acid chain; its full sequence is Iodotyrosine deiodinase (186 aa).

FMN is bound by residues 11–15, 38–39, and Ser-39; these read RKTVR and PS. 3-iodo-L-tyrosine is bound by residues Met-41, Glu-68, Tyr-72, and Lys-92. Residues Met-41, Glu-68, Tyr-72, and Lys-92 each contribute to the L-tyrosine site. Arg-176 is a binding site for FMN.

It belongs to the nitroreductase family. In terms of assembly, homodimer. The cofactor is FMN.

It carries out the reaction 2 iodide + L-tyrosine + 2 NADP(+) = 3,5-diiodo-L-tyrosine + 2 NADPH + H(+). It catalyses the reaction iodide + L-tyrosine + NADP(+) = 3-iodo-L-tyrosine + NADPH. The catalysed reaction is 3-iodo-L-tyrosine + iodide + NADP(+) = 3,5-diiodo-L-tyrosine + NADPH + H(+). The enzyme catalyses L-tyrosine + chloride + NADP(+) = 3-chloro-L-tyrosine + NADPH. It carries out the reaction bromide + L-tyrosine + NADP(+) = 3-bromo-L-tyrosine + NADPH. Functionally, catalyzes the dehalogenation of halotyrosines such as 3-bromo-L-tyrosine, 3-chloro-L-tyrosine, 3-iodo-L-tyrosine and 3,5-diiodo-L-tyrosine. Activity towards 2-iodophenol is weak. The chain is Iodotyrosine deiodinase from Thermotoga neapolitana (strain ATCC 49049 / DSM 4359 / NBRC 107923 / NS-E).